A 1059-amino-acid chain; its full sequence is WD repeat-containing protein on Y chromosome (1059 aa).

11 WD repeats span residues 121–161 (DFCP…ALTA), 170–209 (RSKT…FTLK), 214–256 (RLPQ…KVTT), 344–383 (CVPR…KPSV), 387–426 (GHTS…LLQT), 476–515 (SHTK…KMTI), 528–567 (LEPV…CMRT), 616–658 (QHSD…RRYD), 714–759 (MRQL…GFKG), 766–805 (MAGD…IPNE), and 849–888 (AHRA…IGLL).

The protein is WD repeat-containing protein on Y chromosome of Anopheles gambiae (African malaria mosquito).